A 363-amino-acid polypeptide reads, in one-letter code: Peptide chain release factor 2 (363 aa).

At Gln251 the chain carries N5-methylglutamine.

The protein belongs to the prokaryotic/mitochondrial release factor family. Methylated by PrmC. Methylation increases the termination efficiency of RF2.

It localises to the cytoplasm. Peptide chain release factor 2 directs the termination of translation in response to the peptide chain termination codons UGA and UAA. This is Peptide chain release factor 2 from Helicobacter pylori (strain G27).